A 323-amino-acid chain; its full sequence is Estradiol 17 beta-dehydrogenase 5 (323 aa).

NADP(+) contacts are provided by residues 20 to 24 (GFGTY) and D50. The active-site Proton donor is Y55. H117 contacts substrate. NADP(+)-binding positions include 166–167 (SN), Q190, 216–221 (YSALGS), and 270–280 (KSFSEKRIKEN).

It belongs to the aldo/keto reductase family. In terms of assembly, monomer. Three forms are detected, probably due to post-translational modifications. As to expression, mainly found in liver. Also expressed weakly in kidney.

Active toward androgens, estrogens, and xenobiotic substrates. Also exhibits low 20 alpha-HSD activity. Shows a-stereospecificity in hydrogen transfer between cofactors and substrates (A-specific). Preferentially catalyzes the reduction of 4-androstenedione, 5-alpha-androstane-3,17-dione, androsterone and dehydroepiandrosterone to testosterone, dihydrotestosterone, 5-alpha-androstane-3-alpha,17-beta-diol and 5-androstene-3-beta,17-beta-diol, respectively. The protein is Estradiol 17 beta-dehydrogenase 5 (Akr1c6) of Mus musculus (Mouse).